A 951-amino-acid chain; its full sequence is Kinase suppressor of Ras 2 (951 aa).

The disordered stretch occupies residues 237–298; the sequence is PPPPPLESGH…PGTPPPSSRK (62 aa). The span at 260–274 shows a compositional bias: low complexity; sequence RTPPRTPNIVTTVTP. Threonine 273 and threonine 277 each carry phosphothreonine. Residues 413-457 form a Phorbol-ester/DAG-type zinc finger; it reads KHRFSTKYWMSQTCTVCGKGMLFGLKCKNCKLKCHNKCTKEAPPC. Residues histidine 414, cysteine 426, cysteine 429, cysteine 439, cysteine 442, histidine 447, cysteine 450, and cysteine 457 each coordinate Zn(2+). The residue at position 475 (serine 475) is a Phosphoserine; by MARK3. Disordered stretches follow at residues 489–559 and 614–634; these read RYSD…QKKN and EPTS…DEFE. Residues 494 to 503 are compositionally biased toward polar residues; that stretch reads HISQTLPKTN. Threonine 498 bears the Phosphothreonine mark. Low complexity predominate over residues 518–531; the sequence is SSSNPSSTTSSTPS. A compositionally biased stretch (pro residues) spans 532-552; it reads SPAPPLPPSATPPSPLHPSPQ. Positions 667-932 constitute a Protein kinase domain; the sequence is LEIGELIGKG…TKLMDMLEKL (266 aa). 673–681 provides a ligand contact to ATP; that stretch reads IGKGRFGQV. The active-site Proton donor/acceptor is aspartate 787. Positions 789 and 804 each coordinate ATP.

This sequence belongs to the protein kinase superfamily. TKL Ser/Thr protein kinase family. In terms of assembly, heterodimerizes (via N-terminus) with BRAF (via N-terminus) in a MAP2K1/MEK1-dependent manner. Interacts with BRAF; this increases the low intrinsic protein kinase activity of KSR2. Interacts with MAP2K1, forming a heterodimer that can dimerize to form a heterotetramer. Interacts with MAP3K8, MAPK, RAS and RAF. In terms of processing, phosphorylated on Ser-475 by MARK3.

Its subcellular location is the cytoplasm. The protein localises to the membrane. It carries out the reaction L-seryl-[protein] + ATP = O-phospho-L-seryl-[protein] + ADP + H(+). It catalyses the reaction L-threonyl-[protein] + ATP = O-phospho-L-threonyl-[protein] + ADP + H(+). In terms of biological role, location-regulated scaffold connecting MEK to RAF. Has very low protein kinase activity and can phosphorylate MAP2K1 at several Ser and Thr residues with very low efficiency (in vitro). Acts as MAP2K1/MEK1-dependent allosteric activator of BRAF; upon binding to MAP2K1/MEK1, dimerizes with BRAF and promotes BRAF-mediated phosphorylation of MAP2K1/MEK1. Interaction with BRAF enhances KSR2-mediated phosphorylation of MAP2K1 (in vitro). Blocks MAP3K8 kinase activity and MAP3K8-mediated signaling. Acts as a negative regulator of MAP3K3-mediated activation of ERK, JNK and NF-kappa-B pathways, inhibiting MAP3K3-mediated interleukin-8 production. This chain is Kinase suppressor of Ras 2, found in Mus musculus (Mouse).